The primary structure comprises 101 residues: Ubiquitin-like protein SMT3 (101 aa).

At Ser-2 the chain carries N-acetylserine. Phosphoserine occurs at positions 2 and 4. The Ubiquitin-like domain maps to 22–98; that stretch reads THINLKVSDG…IEAHREQIGG (77 aa). Residue Gly-98 forms a Glycyl lysine isopeptide (Gly-Lys) (interchain with K-? in acceptor proteins) linkage. A propeptide spanning residues 99-101 is cleaved from the precursor; the sequence is ATY.

The protein belongs to the ubiquitin family. SUMO subfamily. In terms of assembly, activated by a E1 ligase composed of AOS1 and UBA2.

Its function is as follows. Not known; suppressor of MIF2 mutations. The sequence is that of Ubiquitin-like protein SMT3 (SMT3) from Saccharomyces cerevisiae (strain ATCC 204508 / S288c) (Baker's yeast).